A 458-amino-acid chain; its full sequence is Alpha-1,3/1,6-mannosyltransferase ALG2 (458 aa).

N-linked (GlcNAc...) asparagine glycosylation is found at Asn-57 and Asn-169. A helical transmembrane segment spans residues 438-458; sequence NISIIYVVSIIFAVLLKVFVF.

The protein belongs to the glycosyltransferase group 1 family.

The protein resides in the endoplasmic reticulum membrane. The catalysed reaction is a beta-D-Man-(1-&gt;4)-beta-D-GlcNAc-(1-&gt;4)-alpha-D-GlcNAc-diphospho-di-trans,poly-cis-dolichol + GDP-alpha-D-mannose = an alpha-D-Man-(1-&gt;3)-beta-D-Man-(1-&gt;4)-beta-D-GlcNAc-(1-&gt;4)-alpha-D-GlcNAc-diphospho-di-trans,poly-cis-dolichol + GDP + H(+). It carries out the reaction an alpha-D-Man-(1-&gt;3)-beta-D-Man-(1-&gt;4)-beta-D-GlcNAc-(1-&gt;4)-alpha-D-GlcNAc-diphospho-di-trans,poly-cis-dolichol + GDP-alpha-D-mannose = an alpha-D-Man-(1-&gt;3)-[alpha-D-Man-(1-&gt;6)]-beta-D-Man-(1-&gt;4)-beta-D-GlcNAc-(1-&gt;4)-alpha-D-GlcNAc-diphospho-di-trans,poly-cis-dolichol + GDP + H(+). It participates in protein modification; protein glycosylation. Mannosylates Man(2)GlcNAc(2)-dolichol diphosphate and Man(1)GlcNAc(2)-dolichol diphosphate to form Man(3)GlcNAc(2)-dolichol diphosphate. This chain is Alpha-1,3/1,6-mannosyltransferase ALG2 (ALG2), found in Candida glabrata (strain ATCC 2001 / BCRC 20586 / JCM 3761 / NBRC 0622 / NRRL Y-65 / CBS 138) (Yeast).